The primary structure comprises 2616 residues: Serine protease ndl (2616 aa).

Positions 1 to 43 (MNYNMDEMEATRLLRHPRRWWSIGFGKRIVAISILVIIVLLFS) are cleaved as a signal peptide. Phosphoserine occurs at positions 215 and 220. A WIID 1 repeat occupies 261–269 (ISWIIDGHD). Asn291 carries N-linked (GlcNAc...) asparagine glycosylation. One copy of the WIID 2 repeat lies at 320–328 (ISWILDHFD). An N-linked (GlcNAc...) asparagine glycan is attached at Asn347. Residues 352-375 (SASSEPIVDTENTNSDHVPTTENG) form a disordered region. Asn379 carries N-linked (GlcNAc...) asparagine glycosylation. One copy of the WIID 3 repeat lies at 399-407 (FDWILDGEE). Asn417 carries an N-linked (GlcNAc...) asparagine glycan. 2 WIID repeats span residues 446–454 (FDWIIDGRE) and 477–485 (FDWIIDGEE). Residues Asn492 and Asn515 are each glycosylated (N-linked (GlcNAc...) asparagine). Residues 528-536 (FDWIIDGGE) form a WIID 6 repeat. The segment covering 537–547 (SSGEVSTSSTS) has biased composition (low complexity). Positions 537–574 (SSGEVSTSSTSQPKLTTREAISNPESPRSSHPLDNPTS) are disordered. A compositionally biased stretch (polar residues) spans 548–565 (QPKLTTREAISNPESPRS). Phosphoserine is present on residues Ser574 and Ser581. N-linked (GlcNAc...) asparagine glycosylation is present at Asn598. O-linked (Xyl...) (glycosaminoglycan) serine glycosylation is present at Ser794. Residues 798–817 (GQGANIFSKNASPQKPTNGQ) are disordered. The span at 804–817 (FSKNASPQKPTNGQ) shows a compositional bias: polar residues. Asn827 is a glycosylation site (N-linked (GlcNAc...) asparagine). Residue Ser829 is glycosylated (O-linked (Xyl...) (glycosaminoglycan) serine). The N-linked (GlcNAc...) asparagine glycan is linked to Asn861. LDL-receptor class A domains are found at residues 889–929 (SRCP…ACTC) and 955–1006 (FGCE…QCSM). 3 disulfides stabilise this stretch: Cys891–Cys905, Cys899–Cys918, and Cys912–Cys927. The region spanning 929–956 (CADRVDEERLCDGYEDCPMGEDELGCFG) is the LDL-receptor class A 2; truncated domain. Disulfide bonds link Cys957-Cys982, Cys964-Cys995, and Cys989-Cys1004. A glycan (N-linked (GlcNAc...) asparagine) is linked at Asn975. The Cell attachment site motif lies at 1031-1033 (RGD). Asn1064 carries an N-linked (GlcNAc...) asparagine glycan. Ser1134 and Ser1136 each carry phosphoserine. In terms of domain architecture, Peptidase S1 1 spans 1145–1383 (IVGGSYTSAL…YLDWLEMATT (239 aa)). An intrachain disulfide couples Cys1170 to Cys1186. Residues His1185 and Asp1233 each act as charge relay system in the active site. 6 disulfides stabilise this stretch: Cys1276/Cys1338, Cys1305/Cys1317, Cys1328/Cys1359, Cys1396/Cys1408, Cys1401/Cys1421, and Cys1415/Cys1430. Residue Ser1332 is the Charge relay system of the active site. The 39-residue stretch at 1394 to 1432 (QLCPGFICVWGGKRCIAKRQRCDRNVDCLGGEDEVGCTY) folds into the LDL-receptor class A 4 domain. Residue Asn1445 is glycosylated (N-linked (GlcNAc...) asparagine). Disordered stretches follow at residues 1530-1557 (FTVSDSATSPSTLLPTTTNPSTWLPSTN) and 1683-1704 (PTTTTESAKTTTTHSSSTHSEK). 2 stretches are compositionally biased toward low complexity: residues 1537 to 1557 (TSPSTLLPTTTNPSTWLPSTN) and 1683 to 1700 (PTTTTESAKTTTTHSSST). One can recognise an LDL-receptor class A 5; truncated domain in the interval 1713–1743 (FVCKKMSQIVDIMMRCDRKVDCEDGTDELDC). 6 disulfides stabilise this stretch: Cys1728/Cys1745, Cys1734/Cys1764, Cys1758/Cys1773, Cys1776/Cys1789, Cys1783/Cys1802, and Cys1796/Cys1811. An LDL-receptor class A 6; truncated domain is found at 1745-1775 (CKDYLKGSLKGLICDGKADCEDLTDEQNCVE). The LDL-receptor class A 7 domain maps to 1774–1813 (VECQSNEFRCPLSKTCLPLSSRCDNKVDCKFKEDEKDCFA). N-linked (GlcNAc...) asparagine glycans are attached at residues Asn1878, Asn1956, and Asn2023. The region spanning 2027–2301 (LVNEQLHEAI…LQDIIDKPSC (275 aa)) is the Peptidase S1 2 domain. Cysteines 2055 and 2071 form a disulfide. 5 N-linked (GlcNAc...) asparagine glycosylation sites follow: Asn2144, Asn2173, Asn2197, Asn2237, and Asn2269. A disulfide bridge connects residues Cys2177 and Cys2230. 3 LDL-receptor class A domains span residues 2308-2346 (PDCSTHRCPLGTCLPQAAMCNGRSDCHDGSDEEETKCRQ), 2349-2389 (QQCA…ICSC), and 2419-2459 (CNCT…YCFG). 6 disulfide bridges follow: Cys2310–Cys2320, Cys2315–Cys2333, Cys2327–Cys2344, Cys2351–Cys2364, Cys2358–Cys2377, and Cys2371–Cys2387. The 33-residue stretch at 2387–2419 (CSCFTYLQATDPSKICDGKRNCWDKSDESSVLC) folds into the LDL-receptor class A 10; truncated domain. Asn2420 carries an N-linked (GlcNAc...) asparagine glycan. Disulfide bonds link Cys2421–Cys2435, Cys2428–Cys2448, and Cys2442–Cys2457. 2 N-linked (GlcNAc...) asparagine glycosylation sites follow: Asn2556 and Asn2601.

Belongs to the peptidase S1 family. Post-translationally, requires cleavage for activation (presumably). As to expression, follicle.

The protein resides in the secreted. Its subcellular location is the extracellular space. It localises to the extracellular matrix. Its function is as follows. Component of the extracellular signaling pathway that establishes the dorsal-ventral pathway of the embryo. A protease cascade involving ndl, gd, snk and ea results in activation of the spz Toll receptor ligand; acts upstream of gd, snk and ea and is required for proteolytic processing of gd. Activation of ea requires activation of the ndl-gd-snk protease cascade and sulfation of a vitelline membrane component by pip. Localized activation of the Toll receptor in the ventral region of the embryo defines cell identities along the dorsal-ventral continuum. This chain is Serine protease ndl, found in Drosophila melanogaster (Fruit fly).